The sequence spans 180 residues: Large ribosomal subunit protein uL5 (180 aa).

This sequence belongs to the universal ribosomal protein uL5 family. As to quaternary structure, part of the 50S ribosomal subunit; part of the 5S rRNA/L5/L18/L25 subcomplex. Contacts the 5S rRNA and the P site tRNA. Forms a bridge to the 30S subunit in the 70S ribosome.

Functionally, this is one of the proteins that bind and probably mediate the attachment of the 5S RNA into the large ribosomal subunit, where it forms part of the central protuberance. In the 70S ribosome it contacts protein S13 of the 30S subunit (bridge B1b), connecting the 2 subunits; this bridge is implicated in subunit movement. Contacts the P site tRNA; the 5S rRNA and some of its associated proteins might help stabilize positioning of ribosome-bound tRNAs. In Clostridium botulinum (strain ATCC 19397 / Type A), this protein is Large ribosomal subunit protein uL5.